The following is a 100-amino-acid chain: Urease subunit gamma (100 aa).

Belongs to the urease gamma subunit family. As to quaternary structure, heterotrimer of UreA (gamma), UreB (beta) and UreC (alpha) subunits. Three heterotrimers associate to form the active enzyme.

Its subcellular location is the cytoplasm. It catalyses the reaction urea + 2 H2O + H(+) = hydrogencarbonate + 2 NH4(+). It participates in nitrogen metabolism; urea degradation; CO(2) and NH(3) from urea (urease route): step 1/1. This is Urease subunit gamma from Saccharopolyspora erythraea (strain ATCC 11635 / DSM 40517 / JCM 4748 / NBRC 13426 / NCIMB 8594 / NRRL 2338).